The chain runs to 391 residues: Homocysteine-responsive endoplasmic reticulum-resident ubiquitin-like domain member 1 protein (391 aa).

N-acetylmethionine is present on Met1. Topologically, residues 1-263 are cytoplasmic; it reads MESETEPEPV…VEEDDEINRD (263 aa). Positions 10-72 constitute a Ubiquitin-like domain; the sequence is VTLLVKSPNQ…LLDHQCLRDL (63 aa). The segment at 100-126 is disordered; sequence KVAESTEEPAGSNRGQYPEDSSSDGLR. Polar residues predominate over residues 112–124; that stretch reads NRGQYPEDSSSDG. The segment at 115-200 is interaction with UBQLN1; the sequence is QYPEDSSSDG…ASGAFVPPPS (86 aa). Phosphoserine is present on Ser135. Positions 170-190 are interaction with SYVN1; sequence LSWFQQIYARQYYMQYLAATA. Residues 264–284 form a helical membrane-spanning segment; that stretch reads WLDWTYSAATFSVFLSILYFY. The Lumenal portion of the chain corresponds to 285–289; the sequence is SSLSR. Residues 290–310 form a helical membrane-spanning segment; it reads FLMVMGATVVMYLHHVGWFPF. Over 311-391 the chain is Cytoplasmic; it reads RPRPVQNFPN…LPEGPPAIAN (81 aa). Positions 318 to 359 are disordered; sequence FPNDGPPPDVVNQDPNNNLQEGTDPETEDPNHLPPDRDVLDG. The span at 346-357 shows a compositional bias: basic and acidic residues; that stretch reads DPNHLPPDRDVL.

As to quaternary structure, interacts with PSEN1 and PSEN2. Interacts with UBXN6. Interacts with UBQLN1, UBQLN2 and UBQLN4. Component of the HRD1 complex, which comprises at least SYNV1/HRD1, FAM8A1, HERPUD1/HERP, OS9, SEL1L and UBE2J1. FAM8A1 binding to SYNV1 may promote recruitment of HERPUD1 to the HRD1 complex. Widely expressed; in the brain, expression seems to be restricted to neurons and vascular smooth muscle cells. Present in activated microglia in senile plaques in the brain of patients with Alzheimer disease.

Its subcellular location is the endoplasmic reticulum membrane. Functionally, component of the endoplasmic reticulum quality control (ERQC) system also called ER-associated degradation (ERAD) involved in ubiquitin-dependent degradation of misfolded endoplasmic reticulum proteins. Could enhance presenilin-mediated amyloid-beta protein 40 generation. Binds to ubiquilins and this interaction is required for efficient degradation of CD3D via the ERAD pathway. The chain is Homocysteine-responsive endoplasmic reticulum-resident ubiquitin-like domain member 1 protein (HERPUD1) from Homo sapiens (Human).